We begin with the raw amino-acid sequence, 414 residues long: Serine/threonine transporter SstT (414 aa).

8 helical membrane passes run 16-36 (GSLVKQILVGLVLGILLAWVS), 46-66 (LGTLFVGALKAVAPILVLMLV), 84-104 (ILFLYLLGTFSAALAAVVFSF), 143-163 (ALLNANYIGILVWAVGLGFAL), 180-200 (AVTFMVKLVIRFAPVGIFGLV), 219-239 (LVVLIGCMLLVALVVNPLLVF), 300-320 (MAGAAITITVLTLAAVHTLGV), and 332-352 (VVASLCACGASGVAGGSLLLI).

It belongs to the dicarboxylate/amino acid:cation symporter (DAACS) (TC 2.A.23) family.

The protein localises to the cell inner membrane. It carries out the reaction L-serine(in) + Na(+)(in) = L-serine(out) + Na(+)(out). The enzyme catalyses L-threonine(in) + Na(+)(in) = L-threonine(out) + Na(+)(out). In terms of biological role, involved in the import of serine and threonine into the cell, with the concomitant import of sodium (symport system). The protein is Serine/threonine transporter SstT of Salmonella arizonae (strain ATCC BAA-731 / CDC346-86 / RSK2980).